Reading from the N-terminus, the 212-residue chain is Pyridoxine/pyridoxamine 5'-phosphate oxidase (212 aa).

FMN is bound by residues 57–62 (RMVLLK), 72–73 (YT), Arg78, Lys79, and Gln101. Lys62 is a substrate binding site. Substrate contacts are provided by Tyr119, Arg123, and Ser127. FMN-binding positions include 136-137 (QS) and Trp181. 187 to 189 (RLH) is a binding site for substrate. Arg191 lines the FMN pocket.

This sequence belongs to the pyridoxamine 5'-phosphate oxidase family. As to quaternary structure, homodimer. It depends on FMN as a cofactor.

It carries out the reaction pyridoxamine 5'-phosphate + O2 + H2O = pyridoxal 5'-phosphate + H2O2 + NH4(+). The catalysed reaction is pyridoxine 5'-phosphate + O2 = pyridoxal 5'-phosphate + H2O2. It functions in the pathway cofactor metabolism; pyridoxal 5'-phosphate salvage; pyridoxal 5'-phosphate from pyridoxamine 5'-phosphate: step 1/1. Its pathway is cofactor metabolism; pyridoxal 5'-phosphate salvage; pyridoxal 5'-phosphate from pyridoxine 5'-phosphate: step 1/1. In terms of biological role, catalyzes the oxidation of either pyridoxine 5'-phosphate (PNP) or pyridoxamine 5'-phosphate (PMP) into pyridoxal 5'-phosphate (PLP). This Erythrobacter litoralis (strain HTCC2594) protein is Pyridoxine/pyridoxamine 5'-phosphate oxidase.